We begin with the raw amino-acid sequence, 617 residues long: NADPH-dependent diflavin oxidoreductase 1 (617 aa).

Residues 3–147 enclose the Flavodoxin-like domain; sequence PMILYASETG…AFLPWLQQTL (145 aa). FMN is bound by residues 9–14, 56–59, 94–103, and E129; these read SETGNA, STHG, and LGDSSYERFC. One can recognise an FAD-binding FR-type domain in the interval 226-465; sequence DDWVWATLKK…HIASPTLFLP (240 aa). Residues 404–407 and 438–441 each bind FAD; these read RQFS and GLCS. NADP(+) is bound by residues T479, 534–535, and 540–544; these read SR and RIYVQ. FAD is bound at residue W617.

Belongs to the NADPH-dependent diflavin oxidoreductase NDOR1 family. It in the N-terminal section; belongs to the flavodoxin family. The protein in the C-terminal section; belongs to the flavoprotein pyridine nucleotide cytochrome reductase family. In terms of assembly, interacts with DRE2; as part of the cytosolic iron-sulfur (Fe-S) protein assembly (CIA) machinery. It depends on FAD as a cofactor. The cofactor is FMN.

The protein localises to the cytoplasm. Its subcellular location is the mitochondrion. The catalysed reaction is 2 oxidized [2Fe-2S]-[protein] + NADPH = 2 reduced [2Fe-2S]-[protein] + NADP(+) + H(+). Functionally, NADPH-dependent reductase which is a central component of the cytosolic iron-sulfur (Fe-S) protein assembly (CIA) machinery. Transfers electrons from NADPH via its FAD and FMN prosthetic groups to the [2Fe-2S] cluster of DRE2, another key component of the CIA machinery. In turn, this reduced cluster provides electrons for assembly of cytosolic iron-sulfur cluster proteins. Positively controls H(2)O(2)-induced cell death. This is NADPH-dependent diflavin oxidoreductase 1 from Cryptococcus neoformans var. neoformans serotype D (strain B-3501A) (Filobasidiella neoformans).